The sequence spans 339 residues: Glyceraldehyde-3-phosphate dehydrogenase (339 aa).

NAD(+)-binding positions include 12–13 (RI), Asp35, and Lys84. D-glyceraldehyde 3-phosphate is bound by residues 155 to 157 (SCT), Thr186, 215 to 216 (TG), and Arg238. Cys156 (nucleophile) is an active-site residue. Asn320 contacts NAD(+).

Belongs to the glyceraldehyde-3-phosphate dehydrogenase family. As to quaternary structure, homotetramer.

It localises to the cytoplasm. The enzyme catalyses D-glyceraldehyde 3-phosphate + phosphate + NAD(+) = (2R)-3-phospho-glyceroyl phosphate + NADH + H(+). It functions in the pathway carbohydrate degradation; glycolysis; pyruvate from D-glyceraldehyde 3-phosphate: step 1/5. The chain is Glyceraldehyde-3-phosphate dehydrogenase (GAPD) from Mastigamoeba balamuthi (Phreatamoeba balamuthi).